The primary structure comprises 523 residues: 2-isopropylmalate synthase (523 aa).

Residues 5-267 enclose the Pyruvate carboxyltransferase domain; that stretch reads VIIFDTTLRD…HTNINHHEIW (263 aa). Mn(2+)-binding residues include Asp14, His202, His204, and Asn238. The interval 392-523 is regulatory domain; sequence RLDYFSVQSG…QNKENNKETV (132 aa).

Belongs to the alpha-IPM synthase/homocitrate synthase family. LeuA type 1 subfamily. As to quaternary structure, homodimer. The cofactor is Mn(2+).

The protein resides in the cytoplasm. It carries out the reaction 3-methyl-2-oxobutanoate + acetyl-CoA + H2O = (2S)-2-isopropylmalate + CoA + H(+). The protein operates within amino-acid biosynthesis; L-leucine biosynthesis; L-leucine from 3-methyl-2-oxobutanoate: step 1/4. In terms of biological role, catalyzes the condensation of the acetyl group of acetyl-CoA with 3-methyl-2-oxobutanoate (2-ketoisovalerate) to form 3-carboxy-3-hydroxy-4-methylpentanoate (2-isopropylmalate). The polypeptide is 2-isopropylmalate synthase (Salmonella typhi).